We begin with the raw amino-acid sequence, 334 residues long: Aspartate carbamoyltransferase catalytic subunit (334 aa).

Residues arginine 71 and threonine 72 each contribute to the carbamoyl phosphate site. Position 99 (lysine 99) interacts with L-aspartate. Residues arginine 121, histidine 151, and glutamine 154 each coordinate carbamoyl phosphate. The L-aspartate site is built by arginine 184 and arginine 239. Carbamoyl phosphate-binding residues include glycine 280 and proline 281.

This sequence belongs to the aspartate/ornithine carbamoyltransferase superfamily. ATCase family. In terms of assembly, heterododecamer (2C3:3R2) of six catalytic PyrB chains organized as two trimers (C3), and six regulatory PyrI chains organized as three dimers (R2).

The enzyme catalyses carbamoyl phosphate + L-aspartate = N-carbamoyl-L-aspartate + phosphate + H(+). It participates in pyrimidine metabolism; UMP biosynthesis via de novo pathway; (S)-dihydroorotate from bicarbonate: step 2/3. Its function is as follows. Catalyzes the condensation of carbamoyl phosphate and aspartate to form carbamoyl aspartate and inorganic phosphate, the committed step in the de novo pyrimidine nucleotide biosynthesis pathway. The polypeptide is Aspartate carbamoyltransferase catalytic subunit (Pseudomonas fluorescens (strain ATCC BAA-477 / NRRL B-23932 / Pf-5)).